The sequence spans 182 residues: WUSCHEL-related homeobox 5 (182 aa).

The tract at residues M1–R24 is disordered. Residues T20–R84 constitute a DNA-binding region (homeobox; WUS-type).

Belongs to the WUS homeobox family. In terms of tissue distribution, specifically expressed in the central cells of a quiescent center (QC) of the root.

It is found in the nucleus. Functionally, transcription factor, which may be involved in the specification and maintenance of the stem cells (QC cells) in the root apical meristem (RAM). The sequence is that of WUSCHEL-related homeobox 5 (WOX5) from Arabidopsis thaliana (Mouse-ear cress).